Reading from the N-terminus, the 1188-residue chain is Carboxylic acid reductase (1188 aa).

Residues His315, Ser408, 429–430 (DG), Thr434, Asp507, 519–522 (YVDR), Lys528, and Lys629 contribute to the AMP site. The region spanning 665–743 (AGERPVIETV…SVAAHIEKER (79 aa)) is the Carrier domain. Residue Ser702 is modified to O-(pantetheine 4'-phosphoryl)serine. NADP(+) is bound by residues 801–804 (NGWL), Arg828, Arg838, 868–869 (DF), 894–896 (SGA), Ser934, Tyr970, Lys974, and Ser997.

It belongs to the ATP-dependent AMP-binding enzyme family. Carboxylic acid reductase subfamily. Pantetheine 4'-phosphate is required as a cofactor.

The catalysed reaction is a carboxylate + ATP + NADPH + H(+) = an aldehyde + AMP + diphosphate + NADP(+). Functionally, catalyzes the ATP- and NADPH-dependent reduction of carboxylic acids to the corresponding aldehydes. Catalyzes the reduction of a very wide range of carboxylic acids, including benzoic acids, heterocyclic, phenylacetic, phenylpropanoic and fatty acid substrates. This chain is Carboxylic acid reductase, found in Segniliparus rugosus (strain ATCC BAA-974 / DSM 45345 / CCUG 50838 / CIP 108380 / JCM 13579 / CDC 945).